The primary structure comprises 153 residues: Selenoprotein F (153 aa).

The N-terminal stretch at 1–19 (MAGEVYLLWLLPLLQGLAS) is a signal peptide. Position 84 (U84) is a non-standard amino acid, selenocysteine.

It belongs to the selenoprotein M/F family. Higher levels in polster, prechordal plate, axis, otic vesicle and somites. Lower levels in fin buds.

It localises to the endoplasmic reticulum lumen. In terms of biological role, may be involved in redox reactions associated with the formation of disulfide bonds. May contribute to the quality control of protein folding in the endoplasmic reticulum. The sequence is that of Selenoprotein F from Danio rerio (Zebrafish).